A 379-amino-acid chain; its full sequence is MGLNDWLGTFAKAEGLDLSSDLEQAYEAALMIQGLELEYFNDRPVRTDVNLGLPQATQTQIFRRFRSALEICRALLSSIERQRAQLDSQELRQLQLIESVVRRYRSKDGQTLFQRPDPLPRSLLGVFDRVRNQLDPEAEANVVAGFRRRRDSTLVSLRILLLMILVPLLLQQISRTYVISPLVDRIAPDIPFLSYTKPRLQQSAVASLREYKAEIEFAALLEGEDSPSVEELRQKLTLKAAELKDEADSESTTAIKNVLADVVATIGFVLVCLFGRDEIRVLRGFFDEVVYGLSDNAKAFVIILFTDIFVGFHSPEGWTVLLQGISSHLGIPAEEQFIDLFIATFPVILATIFKYWIFRYLNRVSPSSVTTLRGMNGGG.

4 helical membrane-spanning segments follow: residues 153–173 (TLVS…LQQI), 254–274 (AIKN…VCLF), 300–320 (FVII…GWTV), and 337–357 (FIDL…KYWI).

The protein belongs to the CemA family.

It is found in the cell inner membrane. Required for H(+) efflux immediately after light irradiation to form a rapid H(+) concentration gradient across the thylakoid membranes. Together with PxcL, contributes to transient H(+) uptake following dark to light transition. This Synechococcus sp. (strain RCC307) protein is Proton extrusion protein PxcA.